We begin with the raw amino-acid sequence, 654 residues long: U-box domain-containing protein 12 (654 aa).

A U-box domain is found at 255 to 329 (IPPEEFRCPI…AQWCESNGIE (75 aa)). The disordered stretch occupies residues 329 to 352 (EPPKRPNISQPSSKASSSSSAPDD). The segment covering 337 to 349 (SQPSSKASSSSSA) has biased composition (low complexity). ARM repeat units follow at residues 387–427 (NHNR…NLSI), 430–469 (ENKG…SLSV), 471–510 (DENK…NLCI), 512–551 (QGNK…ILSS), and 553–592 (PDGK…HLCS).

The enzyme catalyses S-ubiquitinyl-[E2 ubiquitin-conjugating enzyme]-L-cysteine + [acceptor protein]-L-lysine = [E2 ubiquitin-conjugating enzyme]-L-cysteine + N(6)-ubiquitinyl-[acceptor protein]-L-lysine.. The protein operates within protein modification; protein ubiquitination. In terms of biological role, functions as an E3 ubiquitin ligase. The protein is U-box domain-containing protein 12 (PUB12) of Arabidopsis thaliana (Mouse-ear cress).